We begin with the raw amino-acid sequence, 545 residues long: Phenylalanine--tRNA ligase beta subunit (545 aa).

Residues 270 to 346 (LEPKERLLTT…KGYGYENIKV (77 aa)) form the B5 domain. Aspartate 324, aspartate 330, glutamate 333, and aspartate 334 together coordinate Mg(2+).

The protein belongs to the phenylalanyl-tRNA synthetase beta subunit family. Type 2 subfamily. As to quaternary structure, tetramer of two alpha and two beta subunits. Requires Mg(2+) as cofactor.

It localises to the cytoplasm. It catalyses the reaction tRNA(Phe) + L-phenylalanine + ATP = L-phenylalanyl-tRNA(Phe) + AMP + diphosphate + H(+). This Methanosarcina acetivorans (strain ATCC 35395 / DSM 2834 / JCM 12185 / C2A) protein is Phenylalanine--tRNA ligase beta subunit.